Here is a 279-residue protein sequence, read N- to C-terminus: Glycerol uptake facilitator protein (279 aa).

The Cytoplasmic portion of the chain corresponds to 1–8 (MTTAAPTP). The helical transmembrane segment at 9–37 (SLFGQCLAEFLGTALLIFFGTGCVAALKV) threads the bilayer. Topologically, residues 38 to 42 (AGASF) are periplasmic. A helical membrane pass occupies residues 43-63 (GLWEISIIWGVGVSMAIYLSA). The Cytoplasmic portion of the chain corresponds to 64–66 (GVS). The stretch at 67 to 70 (GAHL) is an intramembrane region. The NPA 1 signature appears at 71-73 (NPA). The helical intramembrane region spans 71–81 (NPAVSIALWLF). Residues 82-87 (AGFEGR) lie on the Cytoplasmic side of the membrane. A helical membrane pass occupies residues 88–111 (KLPFYITAQVAGAFCAAALVYTLY). Topologically, residues 112 to 146 (SSLFIEFEQAQNIVRGSQDSLALASVFSTYPHPAL) are periplasmic. The chain crosses the membrane as a helical span at residues 147-172 (SVGQAFLVEVVITAILMAVIMALTDD). Topologically, residues 173-180 (GNGLPRGP) are cytoplasmic. The helical transmembrane segment at 181–197 (LAPLLIGLLIAVIGSAM) threads the bilayer. Topologically, residues 198-201 (GPLT) are periplasmic. The stretch at 202–205 (GFAM) is an intramembrane region. Positions 206–208 (NPA) match the NPA 2 motif. The segment at residues 206-219 (NPARDFGPKLMTYL) is an intramembrane region (helical). At 220–234 (AGWGPIAFTGGREIP) the chain is on the periplasmic side. Residues 235–257 (YFLVPIFAPILGACLGAGGYRVL) traverse the membrane as a helical segment. At 258–279 (IARHLPSAAAPAEAEPEKVRAS) the chain is on the cytoplasmic side.

The protein belongs to the MIP/aquaporin (TC 1.A.8) family.

The protein localises to the cell inner membrane. It catalyses the reaction glycerol(in) = glycerol(out). Functionally, mediates glycerol diffusion across the cytoplasmic membrane via a pore-type mechanism. This chain is Glycerol uptake facilitator protein (glpF), found in Pseudomonas aeruginosa (strain ATCC 15692 / DSM 22644 / CIP 104116 / JCM 14847 / LMG 12228 / 1C / PRS 101 / PAO1).